We begin with the raw amino-acid sequence, 145 residues long: Large ribosomal subunit protein bL17 (145 aa).

Belongs to the bacterial ribosomal protein bL17 family. Part of the 50S ribosomal subunit. Contacts protein L32.

The chain is Large ribosomal subunit protein bL17 from Orientia tsutsugamushi (strain Boryong) (Rickettsia tsutsugamushi).